A 348-amino-acid chain; its full sequence is Sulfate/thiosulfate import ATP-binding protein CysA (348 aa).

The region spanning 3 to 233 (ILIDNISKKF…PATPFVFSLL (231 aa)) is the ABC transporter domain. 35-42 (GPSGSGKS) serves as a coordination point for ATP.

This sequence belongs to the ABC transporter superfamily. Sulfate/tungstate importer (TC 3.A.1.6) family.

The protein resides in the plastid. Its subcellular location is the chloroplast. It catalyses the reaction sulfate(out) + ATP + H2O = sulfate(in) + ADP + phosphate + H(+). The catalysed reaction is thiosulfate(out) + ATP + H2O = thiosulfate(in) + ADP + phosphate + H(+). Functionally, part of the ABC transporter complex involved in sulfate/thiosulfate import. Responsible for energy coupling to the transport system. The polypeptide is Sulfate/thiosulfate import ATP-binding protein CysA (Mesostigma viride (Green alga)).